Here is a 459-residue protein sequence, read N- to C-terminus: NADH-ubiquinone oxidoreductase chain 4 (459 aa).

13 helical membrane-spanning segments follow: residues 22-42 (HLSYTTLLFSFTIALLSLQWL), 61-81 (PISTPLLILTSWMTPLMILVS), 94-113 (RTFTTTIISLQISLTLAFSA), 114-134 (LEMMLFFTMFEATLIPTLIII), 146-166 (AGTYFLFYTLIGSLPLLIALT), 197-217 (WFALLMAFMIKMPLYGLHLWL), 225-245 (PIAGSMILAGVLLKLGGYGII), 258-278 (LSYPFMTLSLWGIIMTGLICL), 285-304 (SLIAYSSVGLMGLVISAALL), 308-330 (LSITGAIILMIAHGLSSSMLFCL), 352-372 (LLPLMTIWWLLASLMNMALPP), 380-400 (LTIIASLFSWANITIILTGLG), and 437-457 (LIMMLHMVPLILLMMKPQLMT).

It belongs to the complex I subunit 4 family.

It localises to the mitochondrion membrane. It carries out the reaction a ubiquinone + NADH + 5 H(+)(in) = a ubiquinol + NAD(+) + 4 H(+)(out). Core subunit of the mitochondrial membrane respiratory chain NADH dehydrogenase (Complex I) that is believed to belong to the minimal assembly required for catalysis. Complex I functions in the transfer of electrons from NADH to the respiratory chain. The immediate electron acceptor for the enzyme is believed to be ubiquinone. This Pelomedusa subrufa (African side-necked turtle) protein is NADH-ubiquinone oxidoreductase chain 4 (MT-ND4).